The chain runs to 350 residues: Guanine nucleotide-binding protein G(t) subunit alpha-1 (350 aa).

A disordered region spans residues 1 to 21 (MGAGASAEEKHSRELEKKLKE). Glycine 2 carries the N-myristoyl glycine lipid modification. Basic and acidic residues predominate over residues 7-21 (AEEKHSRELEKKLKE). Positions 28–350 (RTVKLLLLGA…KENLKDCGLF (323 aa)) constitute a G-alpha domain. The interval 31–44 (KLLLLGAGESGKST) is G1 motif. A GTP-binding site is contributed by 36–43 (GAGESGKS). Mg(2+) is bound at residue serine 43. Tyrosine 142 carries the post-translational modification Phosphotyrosine. GTP-binding positions include aspartate 146, 171-177 (LRSRVKT), glycine 199, 265-268 (NKKD), and alanine 322. Residues 169–177 (DVLRSRVKT) are G2 motif. Threonine 177 contacts Mg(2+). The segment at 192–201 (FRMFDVGGQR) is G3 motif. A G4 motif region spans residues 261 to 268 (VLFLNKKD). A G5 motif region spans residues 320-325 (TCATDT). The interval 340–350 (IKENLKDCGLF) is interaction with RHO.

Heterotrimeric G proteins are composed of 3 subunits alpha, beta and gamma. The alpha chain contains the guanine nucleotide binding site. Interacts with RHO. Interacts with RGS9 and PDE6G. Interacts (when myristoylated) with UNC119; interaction is required for localization in sensory neurons. In terms of tissue distribution, rod.

Its subcellular location is the cell projection. It localises to the cilium. The protein resides in the photoreceptor outer segment. It is found in the membrane. The protein localises to the photoreceptor inner segment. Functionally, functions as a signal transducer for the rod photoreceptor RHO. Required for normal RHO-mediated light perception by the retina. Guanine nucleotide-binding proteins (G proteins) function as transducers downstream of G protein-coupled receptors (GPCRs), such as the photoreceptor RHO. The alpha chain contains the guanine nucleotide binding site and alternates between an active, GTP-bound state and an inactive, GDP-bound state. Activated RHO promotes GDP release and GTP binding. Signaling is mediated via downstream effector proteins, such as cGMP-phosphodiesterase. This is Guanine nucleotide-binding protein G(t) subunit alpha-1 (GNAT1) from Bos taurus (Bovine).